Here is a 662-residue protein sequence, read N- to C-terminus: DCC-interacting protein 13-beta (662 aa).

The region spanning Ala-3 to Val-268 is the BAR domain. Residues Leu-277–Arg-375 enclose the PH domain. Residues Ser-486–Asp-635 form the PID domain. The disordered stretch occupies residues Asp-643 to Ala-662. Residues Ser-653–Ala-662 show a composition bias toward basic and acidic residues.

Homodimer. Homotetramer. Binds RAB5A/Rab5 through an N-terminal domain. This interaction is essential for its recruitment to endosomal membranes as well as its role in cell proliferation. Binds subunits of the NuRD/MeCP1 complex. Interacts with FSHR; interaction is independent of follicle stimulating hormone stimulation. Interacts with APPL1; the interaction is decreased by adiponectin in a time-dependent manner. Forms a complex comprising APPL1, RUVBL2, CTNNB1, HDAC1 and HDAC2; interaction reduces interaction between CTNNB1, HDAC1, HDAC2 and RUVBL2 leading to the decrease of deacetylase activity of this complex; affects the recruitment of repressive complexes to the Wnt target genes. Interacts (via BAR domain) with TBC1D1; interaction is dependent of TBC1D1 phosphorylation at 'Ser-235'; interaction diminishes the phosphorylation of TBC1D1 at 'Thr-596', resulting in inhibition of SLC2A4 translocation and glucose uptake. Interacts with ANXA2; targets APPL2 to endosomes and acting in parallel to RAB5A. Interacts with RAB31 (in GTP-bound form); interaction contributes to or enhances recruitment of APPL2 to the phagosomes; interaction enhances Fc-gamma receptor-mediated phagocytosis through PI3K/Akt signaling in macrophages. Interacts with PIK3R1; forms a complex with PIK3R1 and APPL1. Interacts (via BAR domain) with ADIPOR1; hinders the accessibility of APPL1 to ADIPOR1; negatively regulates adiponectin signaling; ADIPOQ dissociates this interaction and facilitates the recruitment of APPL1 to ADIPOR1. Interacts (via BAR domain) with ADIPOR2; ADIPOQ dissociates this interaction.

Its subcellular location is the early endosome membrane. The protein localises to the nucleus. It is found in the cell membrane. It localises to the endosome membrane. The protein resides in the cytoplasm. Its subcellular location is the cytoplasmic vesicle. The protein localises to the phagosome. It is found in the cell projection. It localises to the ruffle. The protein resides in the ruffle membrane. Its subcellular location is the phagosome membrane. Its function is as follows. Multifunctional adapter protein that binds to various membrane receptors, nuclear factors and signaling proteins to regulate many processes, such as cell proliferation, immune response, endosomal trafficking and cell metabolism. Regulates signaling pathway leading to cell proliferation through interaction with RAB5A and subunits of the NuRD/MeCP1 complex. Plays a role in immune response by modulating phagocytosis, inflammatory and innate immune responses. In macrophages, enhances Fc-gamma receptor-mediated phagocytosis through interaction with RAB31 leading to activation of PI3K/Akt signaling. In response to LPS, modulates inflammatory responses by playing a key role on the regulation of TLR4 signaling and in the nuclear translocation of RELA/NF-kappa-B p65 and the secretion of pro- and anti-inflammatory cytokines. Also functions as a negative regulator of innate immune response via inhibition of AKT1 signaling pathway by forming a complex with APPL1 and PIK3R1. Plays a role in endosomal trafficking of TGFBR1 from the endosomes to the nucleus. Plays a role in cell metabolism by regulating adiponecting ans insulin signaling pathways and adaptative thermogenesis. In muscle, negatively regulates adiponectin-simulated glucose uptake and fatty acid oyidation by inhibiting adiponectin signaling pathway through APPL1 sequestration thereby antagonizing APPL1 action. In muscles, negatively regulates insulin-induced plasma membrane recruitment of GLUT4 and glucose uptake through interaction with TBC1D1. Plays a role in cold and diet-induced adaptive thermogenesis by activating ventromedial hypothalamus (VMH) neurons throught AMPK inhibition which enhances sympathetic outflow to subcutaneous white adipose tissue (sWAT), sWAT beiging and cold tolerance. Also plays a role in other signaling pathways namely Wnt/beta-catenin, HGF and glucocorticoid receptor signaling. Positive regulator of beta-catenin/TCF-dependent transcription through direct interaction with RUVBL2/reptin resulting in the relief of RUVBL2-mediated repression of beta-catenin/TCF target genes by modulating the interactions within the beta-catenin-reptin-HDAC complex. May affect adult neurogenesis in hippocampus and olfactory system via regulating the sensitivity of glucocorticoid receptor. Required for fibroblast migration through HGF cell signaling. The sequence is that of DCC-interacting protein 13-beta from Rattus norvegicus (Rat).